We begin with the raw amino-acid sequence, 370 residues long: GMP synthase [glutamine-hydrolyzing] subunit B (370 aa).

In terms of domain architecture, GMPS ATP-PPase spans 3-189 (FDPQKFVDEI…LGLPRDIYNR (187 aa)). Residue 29 to 35 (SGGVDST) participates in ATP binding.

Heterodimer composed of a glutamine amidotransferase subunit (A) and a GMP-binding subunit (B).

It catalyses the reaction XMP + L-glutamine + ATP + H2O = GMP + L-glutamate + AMP + diphosphate + 2 H(+). The protein operates within purine metabolism; GMP biosynthesis; GMP from XMP (L-Gln route): step 1/1. Catalyzes the synthesis of GMP from XMP. The polypeptide is GMP synthase [glutamine-hydrolyzing] subunit B (guaAB) (Sulfurisphaera tokodaii (strain DSM 16993 / JCM 10545 / NBRC 100140 / 7) (Sulfolobus tokodaii)).